The primary structure comprises 263 residues: Glutamate racemase (263 aa).

Substrate contacts are provided by residues 12-13 (DS) and 44-45 (YG). Catalysis depends on C75, which acts as the Proton donor/acceptor. Position 76-77 (76-77 (NT)) interacts with substrate. C186 serves as the catalytic Proton donor/acceptor. 187–188 (TH) is a binding site for substrate.

The protein belongs to the aspartate/glutamate racemases family.

It carries out the reaction L-glutamate = D-glutamate. Its pathway is cell wall biogenesis; peptidoglycan biosynthesis. In terms of biological role, provides the (R)-glutamate required for cell wall biosynthesis. The sequence is that of Glutamate racemase from Ectopseudomonas mendocina (strain ymp) (Pseudomonas mendocina).